Reading from the N-terminus, the 224-residue chain is Putative ankyrin repeat protein R845 (224 aa).

ANK repeat units follow at residues 1–14 (MVEYLVSLGADVRS), 15–44 (NYDHAIKSAFENGHLQVIKYLISLGSDVSM), 46–74 (YDYILLRASRNGYIDVVKYLIEQGVDPRT), 75–104 (NNDKAVRKASKNGRLEIVEYLVTLGADIRI), 105–134 (DNDSAVRWASKNGHIKTVEFLVAKGADIRA), 136–164 (NDYSLRHSSKHGHIKMVEYLVAQGADVRA), 165–194 (DNDYAIKWASGKGHLEVVKYLVEKGADFRA), and 196–224 (NDCAVKWASQTGRVEIVEYLVSKGAVCPY).

The sequence is that of Putative ankyrin repeat protein R845 from Acanthamoeba polyphaga mimivirus (APMV).